Here is a 253-residue protein sequence, read N- to C-terminus: 3-dehydroquinate dehydratase (253 aa).

3-dehydroquinate is bound by residues 46–48 and Arg-82; that span reads EWR. Residue His-143 is the Proton donor/acceptor of the active site. The Schiff-base intermediate with substrate role is filled by Lys-170. Arg-213, Ser-232, and Gln-236 together coordinate 3-dehydroquinate.

The protein belongs to the type-I 3-dehydroquinase family. In terms of assembly, homodimer.

The enzyme catalyses 3-dehydroquinate = 3-dehydroshikimate + H2O. It functions in the pathway metabolic intermediate biosynthesis; chorismate biosynthesis; chorismate from D-erythrose 4-phosphate and phosphoenolpyruvate: step 3/7. Functionally, involved in the third step of the chorismate pathway, which leads to the biosynthesis of aromatic amino acids. Catalyzes the cis-dehydration of 3-dehydroquinate (DHQ) and introduces the first double bond of the aromatic ring to yield 3-dehydroshikimate. This is 3-dehydroquinate dehydratase from Syntrophotalea carbinolica (strain DSM 2380 / NBRC 103641 / GraBd1) (Pelobacter carbinolicus).